Here is a 188-residue protein sequence, read N- to C-terminus: Elongation factor P (188 aa).

Lys34 is subject to N6-(3,6-diaminohexanoyl)-5-hydroxylysine.

Belongs to the elongation factor P family. Post-translationally, may be beta-lysylated on the epsilon-amino group of Lys-34 by the combined action of EpmA and EpmB, and then hydroxylated on the C5 position of the same residue by EpmC (if this protein is present). Lysylation is critical for the stimulatory effect of EF-P on peptide-bond formation. The lysylation moiety may extend toward the peptidyltransferase center and stabilize the terminal 3-CCA end of the tRNA. Hydroxylation of the C5 position on Lys-34 may allow additional potential stabilizing hydrogen-bond interactions with the P-tRNA.

The protein resides in the cytoplasm. It functions in the pathway protein biosynthesis; polypeptide chain elongation. Its function is as follows. Involved in peptide bond synthesis. Alleviates ribosome stalling that occurs when 3 or more consecutive Pro residues or the sequence PPG is present in a protein, possibly by augmenting the peptidyl transferase activity of the ribosome. Modification of Lys-34 is required for alleviation. The polypeptide is Elongation factor P (Vibrio campbellii (strain ATCC BAA-1116)).